Here is a 250-residue protein sequence, read N- to C-terminus: Ribosomal RNA small subunit methyltransferase J (250 aa).

S-adenosyl-L-methionine-binding positions include 101–102 (RD), 117–118 (ER), 153–154 (SS), and Asp-171.

It belongs to the methyltransferase superfamily. RsmJ family.

It is found in the cytoplasm. It carries out the reaction guanosine(1516) in 16S rRNA + S-adenosyl-L-methionine = N(2)-methylguanosine(1516) in 16S rRNA + S-adenosyl-L-homocysteine + H(+). Specifically methylates the guanosine in position 1516 of 16S rRNA. The polypeptide is Ribosomal RNA small subunit methyltransferase J (Klebsiella pneumoniae (strain 342)).